A 166-amino-acid polypeptide reads, in one-letter code: Large ribosomal subunit protein uL10 (166 aa).

It belongs to the universal ribosomal protein uL10 family. As to quaternary structure, part of the ribosomal stalk of the 50S ribosomal subunit. The N-terminus interacts with L11 and the large rRNA to form the base of the stalk. The C-terminus forms an elongated spine to which L12 dimers bind in a sequential fashion forming a multimeric L10(L12)X complex.

In terms of biological role, forms part of the ribosomal stalk, playing a central role in the interaction of the ribosome with GTP-bound translation factors. This is Large ribosomal subunit protein uL10 (rplJ) from Streptococcus pyogenes serotype M18 (strain MGAS8232).